Reading from the N-terminus, the 92-residue chain is SPbeta prophage-derived uncharacterized protein YoqM (92 aa).

The N-terminal stretch at 1-25 is a signal peptide; it reads MKLRKVLTGSVLSLGLLVSASPAFA.

This is SPbeta prophage-derived uncharacterized protein YoqM (yoqM) from Bacillus subtilis (strain 168).